The sequence spans 110 residues: Integration host factor subunit alpha (110 aa).

The protein belongs to the bacterial histone-like protein family. In terms of assembly, heterodimer of an alpha and a beta chain.

Its function is as follows. This protein is one of the two subunits of integration host factor, a specific DNA-binding protein that functions in genetic recombination as well as in transcriptional and translational control. The protein is Integration host factor subunit alpha of Bdellovibrio bacteriovorus (strain ATCC 15356 / DSM 50701 / NCIMB 9529 / HD100).